Consider the following 787-residue polypeptide: Phenylalanine--tRNA ligase beta subunit (787 aa).

Residues 39 to 149 (APAFAGVVIA…EDAPVGTNIR (111 aa)) form the tRNA-binding domain. The 76-residue stretch at 400–475 (PEAKQVGLRL…RVYGYENIPD (76 aa)) folds into the B5 domain. 4 residues coordinate Mg(2+): Asp453, Asp459, Glu462, and Glu463. Residues 694–786 (SKFQPVRRDL…AATAAGARLR (93 aa)) enclose the FDX-ACB domain.

The protein belongs to the phenylalanyl-tRNA synthetase beta subunit family. Type 1 subfamily. As to quaternary structure, tetramer of two alpha and two beta subunits. Mg(2+) serves as cofactor.

Its subcellular location is the cytoplasm. The catalysed reaction is tRNA(Phe) + L-phenylalanine + ATP = L-phenylalanyl-tRNA(Phe) + AMP + diphosphate + H(+). The polypeptide is Phenylalanine--tRNA ligase beta subunit (pheT) (Neisseria meningitidis serogroup B (strain ATCC BAA-335 / MC58)).